We begin with the raw amino-acid sequence, 386 residues long: D-amino-acid oxidase (386 aa).

The FAD site is built by Gly-14, Gly-15, Val-16, Val-17, Glu-39, Arg-40, Ala-51, Gly-52, and Gly-53. Residues Ser-109–Thr-138 are disordered. Over residues Pro-112 to Val-121 the composition is skewed to pro residues. FAD-binding residues include Arg-174, Val-175, and Ala-176. Residues Tyr-253, Tyr-261, and Lys-332 each coordinate D-serine. Residues Tyr-261 and Lys-332 each coordinate D-proline. FAD-binding residues include Lys-332, Gly-344, Ile-345, Gly-362, and Ala-364. Lys-332 is a binding site for D-dopa. Gly-362 provides a ligand contact to D-serine. Residue Gly-362 participates in D-proline binding. Gly-362 is a binding site for D-dopa.

The protein belongs to the DAMOX/DASOX family.

It carries out the reaction a D-alpha-amino acid + O2 + H2O = a 2-oxocarboxylate + H2O2 + NH4(+). The enzyme catalyses D-alanine + O2 + H2O = pyruvate + H2O2 + NH4(+). The catalysed reaction is D-aspartate + O2 + H2O = oxaloacetate + H2O2 + NH4(+). Catalyzes the oxidative deamination of D-amino acids with broad substrate specificity. Enables the organism to utilize D-amino acids as a source of nutrients. This Zea mays (Maize) protein is D-amino-acid oxidase.